Here is a 579-residue protein sequence, read N- to C-terminus: Fatty-acid amide hydrolase 1 (579 aa).

A helical transmembrane segment spans residues 9–29 (ALSGLSGVCLACSLLSAAVVL). The Cytoplasmic portion of the chain corresponds to 30-403 (RWTRSQTARG…GDFVDPCLGD (374 aa)). The active-site Charge relay system is the Lys-142. Residues Met-191, Ser-217, and 238-241 (IGGS) each bind substrate. The Charge relay system role is filled by Ser-217. The active-site Acyl-ester intermediate is Ser-241. Ser-241 carries the phosphoserine modification. The stretch at 404 to 433 (LVLVLKLPRWFKKLLSFLLKPLFPRLAAFL) is an intramembrane region. The Cytoplasmic segment spans residues 434-579 (NSMCPRSAEK…RLMTPEKRPS (146 aa)).

Belongs to the amidase family. Homodimer.

It is found in the endoplasmic reticulum membrane. It localises to the golgi apparatus membrane. It catalyses the reaction N-(5Z,8Z,11Z,14Z-eicosatetraenoyl)-ethanolamine + H2O = ethanolamine + (5Z,8Z,11Z,14Z)-eicosatetraenoate. It carries out the reaction (9Z)-octadecenamide + H2O = (9Z)-octadecenoate + NH4(+). The enzyme catalyses 2-(5Z,8Z,11Z,14Z-eicosatetraenoyl)-glycerol + H2O = glycerol + (5Z,8Z,11Z,14Z)-eicosatetraenoate + H(+). The catalysed reaction is N-(9Z-hexadecenoyl) ethanolamine + H2O = (9Z)-hexadecenoate + ethanolamine. It catalyses the reaction N-(9Z-octadecenoyl) ethanolamine + H2O = ethanolamine + (9Z)-octadecenoate. It carries out the reaction N-octadecanoyl ethanolamine + H2O = octadecanoate + ethanolamine. The enzyme catalyses N-docosanoyl-ethanolamine + H2O = docosanoate + ethanolamine. The catalysed reaction is N-tetracosanoyl-taurine + H2O = tetracosanoate + taurine. It catalyses the reaction N-(15Z-tetracosenoyl)-ethanolamine + H2O = (15Z)-tetracosenoate + ethanolamine. It carries out the reaction N-(9Z-octadecenoyl)-taurine + H2O = taurine + (9Z)-octadecenoate. The enzyme catalyses N-docosanoyl-taurine + H2O = docosanoate + taurine. The catalysed reaction is N-(15Z-tetracosenoyl)-taurine + H2O = (15Z)-tetracosenoate + taurine. It catalyses the reaction N-tricosanoyl-taurine + H2O = tricosanoate + taurine. It carries out the reaction (9Z,12Z,15Z)-octadecatrienamide + H2O = (9Z,12Z,15Z)-octadecatrienoate + NH4(+). The enzyme catalyses (5Z,8Z,11Z,14Z)-eicosatetraenamide + H2O = (5Z,8Z,11Z,14Z)-eicosatetraenoate + NH4(+). The catalysed reaction is (6Z)-octadecenamide + H2O = (6Z)-octadecenoate + NH4(+). It catalyses the reaction (15Z)-tetracosenamide + H2O = (15Z)-tetracosenoate + NH4(+). It carries out the reaction (8Z,11Z,14Z)-eicosatrienamide + H2O = (8Z,11Z,14Z)-eicosatrienoate + NH4(+). The enzyme catalyses (11Z,14Z,17Z)-eicosatrienamide + H2O = (11Z,14Z,17Z)-eicosatrienoate + NH4(+). The catalysed reaction is (11Z,14Z)-eicosadienamide + H2O = (11Z,14Z)-eicosadienoate + NH4(+). It catalyses the reaction (9Z,12Z)-octadecadienamide + H2O = (9Z,12Z)-octadecadienoate + NH4(+). It carries out the reaction tetradecamide + H2O = tetradecanoate + NH4(+). The enzyme catalyses 1-O-methyl-(5Z,8Z,11Z,14Z)-eicosatetraenoate + H2O = methanol + (5Z,8Z,11Z,14Z)-eicosatetraenoate + H(+). The catalysed reaction is (11Z)-eicosenamide + H2O = (11Z)-eicosenoate + NH4(+). It catalyses the reaction (9Z)-octadecenoate + glycine = N-(9Z-octadecenoyl)glycine + H2O. It carries out the reaction N-(5Z,8Z,11Z,14Z)-eicosatetraenoyl-glycine + H2O = (5Z,8Z,11Z,14Z)-eicosatetraenoate + glycine. The enzyme catalyses N-(5Z,8Z,11Z,14Z-eicosatetraenoyl)-L-serine + H2O = (5Z,8Z,11Z,14Z)-eicosatetraenoate + L-serine. Its activity is regulated as follows. Inhibited the trifluoromethyl compound PF-3845. Its function is as follows. Catalyzes the hydrolysis of endogenous amidated lipids like the endocannabinoid anandamide (N-(5Z,8Z,11Z,14Z-eicosatetraenoyl)-ethanolamine), as well as other fatty amides such as the taurine-conjugated fatty acids (a structural class of central nervous system (CNS) metabolites), to their corresponding fatty acids, thereby regulating the signaling functions of these molecules. FAAH cooperates with PM20D1 in the hydrolysis of amino acid-conjugated fatty acids such as N-fatty acyl glycine and N-fatty acyl-L-serine, thereby acting as a physiological regulator of specific subsets of intracellular, but not of extracellular, N-fatty acyl amino acids. It can also catalyze the hydrolysis of the endocannabinoid 2-arachidonoylglycerol (2-(5Z,8Z,11Z,14Z-eicosatetraenoyl)-glycerol). In Mus musculus (Mouse), this protein is Fatty-acid amide hydrolase 1 (Faah).